The chain runs to 120 residues: Large ribosomal subunit protein bL19 (120 aa).

It belongs to the bacterial ribosomal protein bL19 family.

This protein is located at the 30S-50S ribosomal subunit interface and may play a role in the structure and function of the aminoacyl-tRNA binding site. The chain is Large ribosomal subunit protein bL19 from Chlorobium chlorochromatii (strain CaD3).